The chain runs to 208 residues: Small ribosomal subunit protein uS4 (208 aa).

Residues 98 to 159 (RRLDNVIYRL…KSRTVAVITN (62 aa)) form the S4 RNA-binding domain.

Belongs to the universal ribosomal protein uS4 family. As to quaternary structure, part of the 30S ribosomal subunit. Contacts protein S5. The interaction surface between S4 and S5 is involved in control of translational fidelity.

Its function is as follows. One of the primary rRNA binding proteins, it binds directly to 16S rRNA where it nucleates assembly of the body of the 30S subunit. Functionally, with S5 and S12 plays an important role in translational accuracy. This Desulfatibacillum aliphaticivorans protein is Small ribosomal subunit protein uS4.